The primary structure comprises 520 residues: Bifunctional purine biosynthesis protein PurH (520 aa).

Positions Met-1–Val-150 constitute an MGS-like domain.

It belongs to the PurH family.

The enzyme catalyses (6R)-10-formyltetrahydrofolate + 5-amino-1-(5-phospho-beta-D-ribosyl)imidazole-4-carboxamide = 5-formamido-1-(5-phospho-D-ribosyl)imidazole-4-carboxamide + (6S)-5,6,7,8-tetrahydrofolate. It catalyses the reaction IMP + H2O = 5-formamido-1-(5-phospho-D-ribosyl)imidazole-4-carboxamide. Its pathway is purine metabolism; IMP biosynthesis via de novo pathway; 5-formamido-1-(5-phospho-D-ribosyl)imidazole-4-carboxamide from 5-amino-1-(5-phospho-D-ribosyl)imidazole-4-carboxamide (10-formyl THF route): step 1/1. It participates in purine metabolism; IMP biosynthesis via de novo pathway; IMP from 5-formamido-1-(5-phospho-D-ribosyl)imidazole-4-carboxamide: step 1/1. The protein is Bifunctional purine biosynthesis protein PurH of Corynebacterium glutamicum (strain ATCC 13032 / DSM 20300 / JCM 1318 / BCRC 11384 / CCUG 27702 / LMG 3730 / NBRC 12168 / NCIMB 10025 / NRRL B-2784 / 534).